A 503-amino-acid chain; its full sequence is ATP synthase subunit alpha (503 aa).

Residue 169-176 (GDRKTGKT) coordinates ATP.

The protein belongs to the ATPase alpha/beta chains family. F-type ATPases have 2 components, CF(1) - the catalytic core - and CF(0) - the membrane proton channel. CF(1) has five subunits: alpha(3), beta(3), gamma(1), delta(1), epsilon(1). CF(0) has three main subunits: a(1), b(2) and c(9-12). The alpha and beta chains form an alternating ring which encloses part of the gamma chain. CF(1) is attached to CF(0) by a central stalk formed by the gamma and epsilon chains, while a peripheral stalk is formed by the delta and b chains.

It is found in the cell membrane. It carries out the reaction ATP + H2O + 4 H(+)(in) = ADP + phosphate + 5 H(+)(out). Produces ATP from ADP in the presence of a proton gradient across the membrane. The alpha chain is a regulatory subunit. The polypeptide is ATP synthase subunit alpha (Lactobacillus delbrueckii subsp. bulgaricus (strain ATCC BAA-365 / Lb-18)).